Consider the following 361-residue polypeptide: tRNA/tmRNA (uracil-C(5))-methyltransferase (361 aa).

Gln185, Tyr213, Asn218, Glu234, and Asp294 together coordinate S-adenosyl-L-methionine. Cys319 (nucleophile) is an active-site residue. Glu353 acts as the Proton acceptor in catalysis.

The protein belongs to the class I-like SAM-binding methyltransferase superfamily. RNA M5U methyltransferase family. TrmA subfamily.

It carries out the reaction uridine(54) in tRNA + S-adenosyl-L-methionine = 5-methyluridine(54) in tRNA + S-adenosyl-L-homocysteine + H(+). It catalyses the reaction uridine(341) in tmRNA + S-adenosyl-L-methionine = 5-methyluridine(341) in tmRNA + S-adenosyl-L-homocysteine + H(+). Dual-specificity methyltransferase that catalyzes the formation of 5-methyluridine at position 54 (m5U54) in all tRNAs, and that of position 341 (m5U341) in tmRNA (transfer-mRNA). The protein is tRNA/tmRNA (uracil-C(5))-methyltransferase of Pseudomonas putida (strain ATCC 700007 / DSM 6899 / JCM 31910 / BCRC 17059 / LMG 24140 / F1).